Here is a 524-residue protein sequence, read N- to C-terminus: Phosphoenolpyruvate carboxykinase (ATP) (524 aa).

Positions 52, 188, and 194 each coordinate substrate. Residues Lys194, His213, and 229–237 each bind ATP; that span reads GLSGTGKTT. Mn(2+)-binding residues include Lys194 and His213. Asp250 provides a ligand contact to Mn(2+). ATP contacts are provided by Glu278, Arg314, and Thr439. Arg314 is a binding site for substrate.

The protein belongs to the phosphoenolpyruvate carboxykinase (ATP) family. Mn(2+) is required as a cofactor.

It is found in the cytoplasm. It carries out the reaction oxaloacetate + ATP = phosphoenolpyruvate + ADP + CO2. It participates in carbohydrate biosynthesis; gluconeogenesis. Involved in the gluconeogenesis. Catalyzes the conversion of oxaloacetate (OAA) to phosphoenolpyruvate (PEP) through direct phosphoryl transfer between the nucleoside triphosphate and OAA. The protein is Phosphoenolpyruvate carboxykinase (ATP) of Campylobacter jejuni subsp. jejuni serotype O:2 (strain ATCC 700819 / NCTC 11168).